Reading from the N-terminus, the 120-residue chain is Ribonuclease P protein component (120 aa).

This sequence belongs to the RnpA family. Consists of a catalytic RNA component (M1 or rnpB) and a protein subunit.

The enzyme catalyses Endonucleolytic cleavage of RNA, removing 5'-extranucleotides from tRNA precursor.. Its function is as follows. RNaseP catalyzes the removal of the 5'-leader sequence from pre-tRNA to produce the mature 5'-terminus. It can also cleave other RNA substrates such as 4.5S RNA. The protein component plays an auxiliary but essential role in vivo by binding to the 5'-leader sequence and broadening the substrate specificity of the ribozyme. The polypeptide is Ribonuclease P protein component (Blochmanniella floridana).